Here is a 2169-residue protein sequence, read N- to C-terminus: Voltage-dependent L-type calcium channel subunit alpha-1C (2169 aa).

Topologically, residues 1–153 (MVPLVQPTTP…RACISIVEWK (153 aa)) are cytoplasmic. The tract at residues 76 to 97 (GAALSWQAAIDAGRQAKLMGSA) is calmodulin-binding. A compositionally biased stretch (polar residues) spans 98-108 (GNTTISTVSST). The tract at residues 98–127 (GNTTISTVSSTQRKRQQYGKPKKQSGTTAT) is disordered. Residues 109 to 120 (QRKRQQYGKPKK) are compositionally biased toward basic residues. One copy of the I repeat lies at 140-437 (NPIRRACISI…LVLGVLSGEF (298 aa)). The helical transmembrane segment at 154-172 (PFEIIILLTIFANCVALAI) threads the bilayer. Residues 173-187 (YIPFPEDDSNATNSN) are Extracellular-facing. N-linked (GlcNAc...) asparagine glycosylation is present at Asn182. Residues 188 to 208 (LERVEYLFLIIFTVEAFLKVI) form a helical membrane-spanning segment. At 209–217 (AYGLLFHPN) the chain is on the cytoplasmic side. Residues 218–238 (AYLRNGWNLLDFIIVVVGLFS) traverse the membrane as a helical segment. Over 239–261 (AILEQATKADGANALGGKGAGFD) the chain is Extracellular. Residues 262-280 (VKALRAFRVLRPLRLVSGV) form a helical membrane-spanning segment. The Cytoplasmic portion of the chain corresponds to 281-297 (PSLQVVLNSIIKAMVPL). Residues 298–319 (LHTALLVLFVIIIYAIIGLELF) traverse the membrane as a helical segment. Topologically, residues 320–379 (MGKMHKTCYNQEGITDVPAEEDPSPCALESGHGRQCQNGTVCKPGWDGPKHGITNFDNFA) are extracellular. Cys345 and Cys361 are disulfide-bonded. Asn357 carries N-linked (GlcNAc...) asparagine glycosylation. Residues 380–401 (FAMLTVFQCITMEGWTDVLYWM) constitute an intramembrane region (pore-forming). The Selectivity filter of repeat I signature appears at 390-393 (TMEG). Glu392 provides a ligand contact to Ca(2+). The Extracellular segment spans residues 402–409 (QDAMGYEL). A helical membrane pass occupies residues 410 to 430 (PWVYFVSLVIFGSFFVLNLVL). The Cytoplasmic segment spans residues 431–553 (GVLSGEFSKE…RKCRAAVKSN (123 aa)). Positions 457 to 474 (QQLEEDLKGYLDWITQAE) are AID/alpha-interaction domain; mediates interaction with the beta subunit. The interval 478–510 (PENEDEGVDEEKPRNMSMPTSETESVNTENVAG) is disordered. A compositionally biased stretch (polar residues) spans 494 to 507 (SMPTSETESVNTEN). Residue Ser498 is modified to Phosphoserine. The residue at position 505 (Thr505) is a Phosphothreonine. One copy of the II repeat lies at 539–785 (NRFCRRKCRA…VFLAIAVDNL (247 aa)). A helical transmembrane segment spans residues 554-572 (VFYWLVIFLVFLNTLTIAS). The Extracellular portion of the chain corresponds to 573–583 (EHYNQPHWLTE). The helical transmembrane segment at 584 to 604 (VQDTANKALLALFTAEMLLKM) threads the bilayer. Topologically, residues 605–615 (YSLGLQAYFVS) are cytoplasmic. A helical membrane pass occupies residues 616 to 635 (LFNRLDCFIVCGGILETILV). The Extracellular segment spans residues 636 to 644 (ETKIMSPLG). A helical membrane pass occupies residues 645 to 663 (ISVLRCVRLLRIFKITRYW). Residues 664 to 682 (NSLSNLVASLLNSVRSIAS) lie on the Cytoplasmic side of the membrane. Residues 683–702 (LLLLLFLFIIIFSLLGMQLF) form a helical membrane-spanning segment. Residues 703 to 722 (GGKFNFDEMRTRRSTFDNFP) are Extracellular-facing. Residues 723-744 (QSLLTVFQILTGEDWNSVMYDG) constitute an intramembrane region (pore-forming). A Selectivity filter of repeat II motif is present at residues 733–736 (TGED). A Ca(2+)-binding site is contributed by Glu735. Residues 745 to 754 (IMAYGGPSFP) lie on the Extracellular side of the membrane. A helical membrane pass occupies residues 755 to 774 (GMLVCIYFIILFICGNYILL). At 775 to 929 (NVFLAIAVDN…LQCHRIVNDT (155 aa)) the chain is on the cytoplasmic side. The interval 793–890 (SAQKEEEEEK…EMPVGPRPRP (98 aa)) is disordered. Basic and acidic residues predominate over residues 812–835 (SPEKKQEVVEKPAVEETKEEKIEL). Residues Ser837 and Ser844 each carry the phosphoserine modification. The tract at residues 858 to 905 (NENEDKSPYPNPDAAGEEDEEEPEMPVGPRPRPLSELHLKEKAVPMPE) is interaction with STAC2. A compositionally biased stretch (acidic residues) spans 872 to 881 (AGEEDEEEPE). The stretch at 916–1198 (NRFRLQCHRI…IFVGFVIVTF (283 aa)) is one III repeat. A helical membrane pass occupies residues 930–948 (IFTNLILFFILLSSISLAA). At 949–960 (EDPVQHTSFRNH) the chain is on the extracellular side. The helical transmembrane segment at 961 to 980 (ILFYFDIVFTTIFTIEIALK) threads the bilayer. Residues 981 to 996 (MTAYGAFLHKGSFCRN) lie on the Cytoplasmic side of the membrane. A helical transmembrane segment spans residues 997-1015 (YFNILDLLVVSVSLISFGI). Topologically, residues 1016-1022 (QSSAINV) are extracellular. A helical membrane pass occupies residues 1023 to 1041 (VKILRVLRVLRPLRAINRA). Over 1042–1060 (KGLKHVVQCVFVAIRTIGN) the chain is Cytoplasmic. The chain crosses the membrane as a helical span at residues 1061 to 1080 (IVIVTTLLQFMFACIGVQLF). Topologically, residues 1081-1130 (KGKLYTCSDSSKQTEAECKGNYITYKDGEVDQPIIQPRSWENSKFDFDNV) are extracellular. Cys1087 and Cys1098 are disulfide-bonded. A dihydropyridine binding region spans residues 1118-1207 (RSWENSKFDF…FQEQGEQEYK (90 aa)). Residues 1131 to 1151 (LAAMMALFTVSTFEGWPELLY) constitute an intramembrane region (pore-forming). The Selectivity filter of repeat III motif lies at 1142–1145 (TFEG). Glu1144 is a binding site for Ca(2+). Topologically, residues 1152–1168 (RSIDSHTEDKGPIYNYR) are extracellular. The helical transmembrane segment at 1169–1190 (VEISIFFIIYIIIIAFFMMNIF) threads the bilayer. Residues 1191–1248 (VGFVIVTFQEQGEQEYKNCELDKNQRQCVEYALKARPLRRYIPKNQHQYKVWYVVNST) are Cytoplasmic-facing. The IV repeat unit spans residues 1235 to 1508 (NQHQYKVWYV…LFVAVVMDNF (274 aa)). The chain crosses the membrane as a helical span at residues 1249-1270 (YFEYLMFVLILLNTICLAMQHY). The Extracellular segment spans residues 1271 to 1278 (GQSCLFKI). The chain crosses the membrane as a helical span at residues 1279–1300 (AMNILNMLFTGLFTVEMILKLI). Over 1301–1310 (AFKPKHYFCD) the chain is Cytoplasmic. Residues 1311–1330 (AWNTFDALIVVGSIVDIAIT) form a helical membrane-spanning segment. The Extracellular portion of the chain corresponds to 1331–1353 (EVNPAEHTQCSPSMNAEENSRIS). Residues 1354–1372 (ITFFRLFRVMRLVKLLSRG) traverse the membrane as a helical segment. Residues 1373–1390 (EGIRTLLWTFIKSFQALP) are Cytoplasmic-facing. Residues 1391–1411 (YVALLIVMLFFIYAVIGMQVF) form a helical membrane-spanning segment. Over 1412–1433 (GKIALNDTTEINRNNNFQTFPQ) the chain is Extracellular. Asn1417 carries an N-linked (GlcNAc...) asparagine glycan. Residues 1434 to 1452 (AVLLLFRCATGEAWQDIML) constitute an intramembrane region (pore-forming). Positions 1443–1446 (TGEA) match the Selectivity filter of repeat IV motif. The Extracellular portion of the chain corresponds to 1453 to 1480 (ACMPGKKCAPESDPSNSTEGETPCGSSF). The segment at 1459–1527 (KCAPESDPSN…LGPHHLDEFK (69 aa)) is dihydropyridine binding. Residues Cys1460 and Cys1476 are joined by a disulfide bond. N-linked (GlcNAc...) asparagine glycosylation is present at Asn1468. The interval 1473–1515 (ETPCGSSFAVFYFISFYMLCAFLIINLFVAVVMDNFDYLTRDW) is phenylalkylamine binding. A helical membrane pass occupies residues 1481–1505 (AVFYFISFYMLCAFLIINLFVAVVM). Over 1506–2169 (DNFDYLTRDW…ADSRVHVRSL (664 aa)) the chain is Cytoplasmic. The tract at residues 1640–1667 (DEVTVGKFYATFLIQEYFRKFKKRKEQG) is important for interaction with STAC1, STAC2 and STAC3. Residues 1646 to 1666 (KFYATFLIQEYFRKFKKRKEQ) form a calmodulin-binding IQ region region. The segment at 1680–1699 (LQAGLRTLHDIGPEIRRAIS) is important for localization in at the junctional membrane. Phosphoserine is present on residues Ser1699 and Ser1720. 2 disordered regions span residues 1761–1793 (KAGNNQGDTESPSHEKLVDSTFTPSSYSSTGSN) and 1894–1920 (ENRQLTPPEEDKGDTRPSPKKGFLRSA). The segment covering 1780-1792 (STFTPSSYSSTGS) has biased composition (polar residues). Over residues 1894–1910 (ENRQLTPPEEDKGDTRP) the composition is skewed to basic and acidic residues. Ser1927 is subject to Phosphoserine.

The protein belongs to the calcium channel alpha-1 subunit (TC 1.A.1.11) family. CACNA1C subfamily. As to quaternary structure, component of a calcium channel complex consisting of a pore-forming alpha subunit (CACNA1C) and ancillary beta, gamma and delta subunits. The channel complex contains alpha, beta, gamma and delta subunits in a 1:1:1:1 ratio, i.e. it contains only one of each type of subunit. CACNA1C channel activity is modulated by ancillary subunits, such as CACNB1, CACNB2, CACNB3, CACNA2D1 and CACNA2D4. Interacts with CACNB1. Interacts with CACNB2. Identified in a complex with CACNA2D4 and CACNB3. Interacts with CACNB3. Interacts with CACNA2D1. Interacts with CACNA2D4. Interacts with the gamma subunits CACNG4, CACNG6, CACNG7 and CACNG8. Interacts with CALM1. Interacts (via the N-terminus and the C-terminal C and IQ motifs) with CABP1; this inhibits Ca(2+)-dependent channel inactivation. The binding via the C motif is calcium independent whereas the binding via IQ requires the presence of calcium and is mutually exclusive with calmodulin binding. The binding to the cytoplasmic N-terminal domain is calcium independent but is essential for the channel modulation. Interacts (via C-terminal CDB motif) with CABP5; in a calcium-dependent manner. Interacts with CIB1; the interaction increases upon cardiomyocytes hypertrophy. Interacts with STAC2 and STAC3; this inhibits channel inactivation. Phosphorylation by PKA at Ser-1927 activates the channel. Elevated levels of blood glucose lead to increased phosphorylation by PKA. In terms of tissue distribution, expressed in heart. Expressed in uterus.

It localises to the cell membrane. Its subcellular location is the sarcolemma. The protein localises to the perikaryon. It is found in the postsynaptic density membrane. The protein resides in the cell projection. It localises to the dendrite. Its subcellular location is the T-tubule. It catalyses the reaction Ca(2+)(in) = Ca(2+)(out). With respect to regulation, inhibited by dihydropyridines (DHP), such as isradipine. Inhibited by nifedipine. Channel activity is regulated by Ca(2+) and calmodulin. Binding of STAC1, STAC2 or STAC3 to a region that overlaps with the calmodulin binding site inhibits channel inactivation by Ca(2+) and calmodulin. Binding of calmodulin or CABP1 at the same regulatory sites results in opposite effects on the channel function. Shear stress and pressure increases calcium channel activity. Its function is as follows. Pore-forming, alpha-1C subunit of the voltage-gated calcium channel that gives rise to L-type calcium currents. Mediates influx of calcium ions into the cytoplasm, and thereby triggers calcium release from the sarcoplasm. Plays an important role in excitation-contraction coupling in the heart. Required for normal heart development and normal regulation of heart rhythm. Required for normal contraction of smooth muscle cells in blood vessels and in the intestine. Essential for normal blood pressure regulation via its role in the contraction of arterial smooth muscle cells. Long-lasting (L-type) calcium channels belong to the 'high-voltage activated' (HVA) group. This chain is Voltage-dependent L-type calcium channel subunit alpha-1C (CACNA1C), found in Cavia porcellus (Guinea pig).